Reading from the N-terminus, the 161-residue chain is Protein-export protein SecB (161 aa).

Belongs to the SecB family. As to quaternary structure, homotetramer, a dimer of dimers. One homotetramer interacts with 1 SecA dimer.

It localises to the cytoplasm. In terms of biological role, one of the proteins required for the normal export of preproteins out of the cell cytoplasm. It is a molecular chaperone that binds to a subset of precursor proteins, maintaining them in a translocation-competent state. It also specifically binds to its receptor SecA. This is Protein-export protein SecB from Ectopseudomonas mendocina (strain ymp) (Pseudomonas mendocina).